Reading from the N-terminus, the 168-residue chain is uncharacterized protein (168 aa).

Positions 18–73 (RTTVKTKSHNPKTLYPNNKPRWESKLHAGPKGFQSSRTSEKPGRPDPDPEDDPPIP) are disordered. Over residues 55-64 (TSEKPGRPDP) the composition is skewed to basic and acidic residues. Helical transmembrane passes span 84-104 (IVVS…VLEV) and 113-133 (VPLW…ALGI).

It localises to the membrane. This is an uncharacterized protein from Arabidopsis thaliana (Mouse-ear cress).